Reading from the N-terminus, the 253-residue chain is 5'/3'-nucleotidase SurE (253 aa).

A divalent metal cation-binding residues include Asp-8, Asp-9, Ser-39, and Asn-92.

The protein belongs to the SurE nucleotidase family. It depends on a divalent metal cation as a cofactor.

It localises to the cytoplasm. It carries out the reaction a ribonucleoside 5'-phosphate + H2O = a ribonucleoside + phosphate. The catalysed reaction is a ribonucleoside 3'-phosphate + H2O = a ribonucleoside + phosphate. It catalyses the reaction [phosphate](n) + H2O = [phosphate](n-1) + phosphate + H(+). Nucleotidase with a broad substrate specificity as it can dephosphorylate various ribo- and deoxyribonucleoside 5'-monophosphates and ribonucleoside 3'-monophosphates with highest affinity to 3'-AMP. Also hydrolyzes polyphosphate (exopolyphosphatase activity) with the preference for short-chain-length substrates (P20-25). Might be involved in the regulation of dNTP and NTP pools, and in the turnover of 3'-mononucleotides produced by numerous intracellular RNases (T1, T2, and F) during the degradation of various RNAs. In Salmonella arizonae (strain ATCC BAA-731 / CDC346-86 / RSK2980), this protein is 5'/3'-nucleotidase SurE.